We begin with the raw amino-acid sequence, 584 residues long: 2-isopropylmalate synthase (584 aa).

Positions 40-314 (PRWCAVDLRD…DPQIDFSDIE (275 aa)) constitute a Pyruvate carboxyltransferase domain. Positions 49, 253, 255, and 289 each coordinate Mg(2+). The tract at residues 456–584 (SRDGSGSTWG…VRDAQEAAQD (129 aa)) is regulatory domain.

The protein belongs to the alpha-IPM synthase/homocitrate synthase family. LeuA type 2 subfamily. In terms of assembly, homodimer. Mg(2+) is required as a cofactor.

The protein resides in the cytoplasm. The enzyme catalyses 3-methyl-2-oxobutanoate + acetyl-CoA + H2O = (2S)-2-isopropylmalate + CoA + H(+). It participates in amino-acid biosynthesis; L-leucine biosynthesis; L-leucine from 3-methyl-2-oxobutanoate: step 1/4. In terms of biological role, catalyzes the condensation of the acetyl group of acetyl-CoA with 3-methyl-2-oxobutanoate (2-ketoisovalerate) to form 3-carboxy-3-hydroxy-4-methylpentanoate (2-isopropylmalate). This Kocuria rhizophila (strain ATCC 9341 / DSM 348 / NBRC 103217 / DC2201) protein is 2-isopropylmalate synthase.